The chain runs to 345 residues: Beta-hexosaminidase (345 aa).

Substrate contacts are provided by residues aspartate 60, arginine 68, arginine 132, and 162–163 (KH). Histidine 175 acts as the Proton donor/acceptor in catalysis. The Nucleophile role is filled by aspartate 247.

The protein belongs to the glycosyl hydrolase 3 family. NagZ subfamily.

It is found in the cytoplasm. The enzyme catalyses Hydrolysis of terminal non-reducing N-acetyl-D-hexosamine residues in N-acetyl-beta-D-hexosaminides.. The protein operates within cell wall biogenesis; peptidoglycan recycling. Plays a role in peptidoglycan recycling by cleaving the terminal beta-1,4-linked N-acetylglucosamine (GlcNAc) from peptide-linked peptidoglycan fragments, giving rise to free GlcNAc, anhydro-N-acetylmuramic acid and anhydro-N-acetylmuramic acid-linked peptides. The protein is Beta-hexosaminidase of Actinobacillus pleuropneumoniae serotype 5b (strain L20).